The chain runs to 664 residues: Alpha-1,4-glucan:maltose-1-phosphate maltosyltransferase (664 aa).

3 residues coordinate alpha-maltose 1-phosphate: K261, Q321, and D356. D393 acts as the Nucleophile in catalysis. N394 lines the alpha-maltose 1-phosphate pocket. E422 (proton donor) is an active-site residue. 533-534 (KY) is a binding site for alpha-maltose 1-phosphate.

This sequence belongs to the glycosyl hydrolase 13 family. GlgE subfamily. In terms of assembly, homodimer.

It catalyses the reaction alpha-maltose 1-phosphate + [(1-&gt;4)-alpha-D-glucosyl](n) = [(1-&gt;4)-alpha-D-glucosyl](n+2) + phosphate. Maltosyltransferase that uses maltose 1-phosphate (M1P) as the sugar donor to elongate linear or branched alpha-(1-&gt;4)-glucans. Is involved in a branched alpha-glucan biosynthetic pathway from trehalose, together with TreS, Mak and GlgB. This chain is Alpha-1,4-glucan:maltose-1-phosphate maltosyltransferase, found in Pseudomonas aeruginosa (strain ATCC 15692 / DSM 22644 / CIP 104116 / JCM 14847 / LMG 12228 / 1C / PRS 101 / PAO1).